We begin with the raw amino-acid sequence, 180 residues long: UPF0340 protein LACR_0494 (180 aa).

This sequence belongs to the UPF0340 family.

The sequence is that of UPF0340 protein LACR_0494 from Lactococcus lactis subsp. cremoris (strain SK11).